Reading from the N-terminus, the 51-residue chain is U-Asilidin(1)-Mar1a (51 aa).

Positions 1 to 23 (MANYIEVFSVLAIIFATVLAALA) are cleaved as a signal peptide. Cystine bridges form between cysteine 26–cysteine 40, cysteine 33–cysteine 44, and cysteine 39–cysteine 49.

This sequence belongs to the asilidin-1 family. As to expression, expressed by the venom gland. Is the most highly expressed peptide and is around 3000 times higher expressed in the thoracic glands compared to its body tissues.

The protein localises to the secreted. In terms of biological role, induces neurotoxic effect on honeybees, including slow movements, disorientation and paralysis. Since it provokes similar symptoms than omega-atracotoxin, it is probable that it acts in the same way by inhibiting voltage-gated calcium channels. In Machimus arthriticus (Breck robberfly), this protein is U-Asilidin(1)-Mar1a.